The following is a 246-amino-acid chain: 14-3-3 protein eta (246 aa).

N-acetylglycine is present on Gly2. A phosphoserine mark is found at Ser25 and Ser59.

This sequence belongs to the 14-3-3 family. In terms of assembly, homodimer. Interacts with many nuclear hormone receptors and cofactors including AR, ESR1, ESR2, MC2R, NR3C1, NRIP1, PPARBP and THRA. Interacts with ABL1 (phosphorylated form); the interaction retains it in the cytoplasm. Weakly interacts with CDKN1B. Interacts with ARHGEF28 and CDK16. Interacts with GAB2. Interacts with KCNK18 in a phosphorylation-dependent manner. Interacts with SAMSN1. Interacts with the 'Ser-241' phosphorylated form of PDPK1. Interacts with the 'Thr-369' phosphorylated form of DAPK2. Interacts with PI4KB, TBC1D22A and TBC1D22B. Interacts with SLITRK1. Interacts with MEFV. In terms of processing, phosphorylated on Ser-59 by protein kinase C delta type catalytic subunit in a sphingosine-dependent fashion.

It localises to the cytoplasm. Functionally, adapter protein implicated in the regulation of a large spectrum of both general and specialized signaling pathways. Binds to a large number of partners, usually by recognition of a phosphoserine or phosphothreonine motif. Binding generally results in the modulation of the activity of the binding partner. Negatively regulates the kinase activity of PDPK1. The chain is 14-3-3 protein eta (YWHAH) from Bos taurus (Bovine).